We begin with the raw amino-acid sequence, 483 residues long: Rhamnulokinase (483 aa).

11–15 (ASSGR) is an ATP binding site. Residues G79 and 234 to 236 (HDT) contribute to the substrate site. D235 functions as the Proton acceptor in the catalytic mechanism. T257 lines the ATP pocket. N294 is a binding site for substrate. ATP is bound at residue Q302. A disulfide bond links C352 and C369. ATP is bound at residue G401.

It belongs to the rhamnulokinase family. Requires Mg(2+) as cofactor.

The catalysed reaction is L-rhamnulose + ATP = L-rhamnulose 1-phosphate + ADP + H(+). It participates in carbohydrate degradation; L-rhamnose degradation; glycerone phosphate from L-rhamnose: step 2/3. Its function is as follows. Involved in the catabolism of L-rhamnose (6-deoxy-L-mannose). Catalyzes the transfer of the gamma-phosphate group from ATP to the 1-hydroxyl group of L-rhamnulose to yield L-rhamnulose 1-phosphate. In Listeria innocua serovar 6a (strain ATCC BAA-680 / CLIP 11262), this protein is Rhamnulokinase.